A 70-amino-acid chain; its full sequence is Large ribosomal subunit protein uL29 (70 aa).

It belongs to the universal ribosomal protein uL29 family.

The protein is Large ribosomal subunit protein uL29 of Prochlorococcus marinus (strain NATL1A).